The primary structure comprises 114 residues: Large ribosomal subunit protein bL20 (114 aa).

Belongs to the bacterial ribosomal protein bL20 family.

Binds directly to 23S ribosomal RNA and is necessary for the in vitro assembly process of the 50S ribosomal subunit. It is not involved in the protein synthesizing functions of that subunit. The polypeptide is Large ribosomal subunit protein bL20 (Anaeromyxobacter sp. (strain Fw109-5)).